The sequence spans 372 residues: 4-hydroxy-3-methylbut-2-en-1-yl diphosphate synthase (flavodoxin) (372 aa).

[4Fe-4S] cluster contacts are provided by C270, C273, C305, and E312.

It belongs to the IspG family. It depends on [4Fe-4S] cluster as a cofactor.

It catalyses the reaction (2E)-4-hydroxy-3-methylbut-2-enyl diphosphate + oxidized [flavodoxin] + H2O + 2 H(+) = 2-C-methyl-D-erythritol 2,4-cyclic diphosphate + reduced [flavodoxin]. Its pathway is isoprenoid biosynthesis; isopentenyl diphosphate biosynthesis via DXP pathway; isopentenyl diphosphate from 1-deoxy-D-xylulose 5-phosphate: step 5/6. In terms of biological role, converts 2C-methyl-D-erythritol 2,4-cyclodiphosphate (ME-2,4cPP) into 1-hydroxy-2-methyl-2-(E)-butenyl 4-diphosphate. This Vibrio parahaemolyticus serotype O3:K6 (strain RIMD 2210633) protein is 4-hydroxy-3-methylbut-2-en-1-yl diphosphate synthase (flavodoxin).